Consider the following 142-residue polypeptide: Putative tyrosine phosphatase 123R (142 aa).

The Tyrosine-protein phosphatase domain occupies 2–137 (EPTKIVENLY…LAQFERWLNS (136 aa)). Catalysis depends on cysteine 81, which acts as the Phosphocysteine intermediate.

Belongs to the protein-tyrosine phosphatase family.

This is Putative tyrosine phosphatase 123R from Invertebrate iridescent virus 6 (IIV-6).